Here is a 241-residue protein sequence, read N- to C-terminus: NAD-dependent protein deacetylase 2 (241 aa).

The 241-residue stretch at 1-241 (MTGKPLVAIL…ALPALLRGLG (241 aa)) folds into the Deacetylase sirtuin-type domain. Ala-13, Thr-17, Arg-25, Gln-92, Val-94, Asp-95, and His-112 together coordinate NAD(+). Nicotinamide-binding residues include Val-94 and Asp-95. His-112 (proton acceptor) is an active-site residue. 4 residues coordinate Zn(2+): Cys-120, Cys-123, Cys-145, and Cys-148. Thr-186, Ser-187, Asn-211, and Ile-229 together coordinate NAD(+).

It belongs to the sirtuin family. Class U subfamily. Zn(2+) serves as cofactor.

It localises to the cytoplasm. It carries out the reaction N(6)-acetyl-L-lysyl-[protein] + NAD(+) + H2O = 2''-O-acetyl-ADP-D-ribose + nicotinamide + L-lysyl-[protein]. Functionally, NAD-dependent protein deacetylase which modulates the activities of several enzymes which are inactive in their acetylated form. The chain is NAD-dependent protein deacetylase 2 from Streptomyces coelicolor (strain ATCC BAA-471 / A3(2) / M145).